The following is a 239-amino-acid chain: Large ribosomal subunit protein uL2 (239 aa).

Disordered regions lie at residues 1 to 20 and 202 to 239; these read MGHRIKTQNRGRGGPTYRAP and FGGGGHQHTGRPKTVSRGTSPGRKVGSVAARRTGRRKR.

It belongs to the universal ribosomal protein uL2 family. As to quaternary structure, part of the 50S ribosomal subunit. Forms a bridge to the 30S subunit in the 70S ribosome.

Functionally, one of the primary rRNA binding proteins. Required for association of the 30S and 50S subunits to form the 70S ribosome, for tRNA binding and peptide bond formation. It has been suggested to have peptidyltransferase activity; this is somewhat controversial. Makes several contacts with the 16S rRNA in the 70S ribosome. The protein is Large ribosomal subunit protein uL2 of Methanosphaerula palustris (strain ATCC BAA-1556 / DSM 19958 / E1-9c).